The chain runs to 259 residues: Polycomb group RING finger protein 1 (259 aa).

Residues 45–84 (CYLCAGYFIDATTITECLHTFCKSCIVKYLQTSKYCPLCN) form an RING-type zinc finger.

In terms of assembly, component of a PRC1-like complex.

Its subcellular location is the nucleus. In terms of biological role, component of a Polycomb group (PcG) multiprotein PRC1-like complex, a complex class required to maintain the transcriptionally repressive state of many genes, including Hox genes, throughout development. PcG PRC1 complex acts via chromatin remodeling and modification of histones; it mediates monoubiquitination of histone H2A 'Lys-119', rendering chromatin heritably changed in its expressibility. The chain is Polycomb group RING finger protein 1 (pcgf1) from Xenopus laevis (African clawed frog).